The chain runs to 303 residues: CDAN1-interacting nuclease 1 (303 aa).

It localises to the nucleus. The protein localises to the cytoplasm. May play a role in erythroid cell differentiation. This is CDAN1-interacting nuclease 1 (cdin1) from Xenopus tropicalis (Western clawed frog).